The sequence spans 159 residues: Transcriptional repressor NrdR (159 aa).

Residues 3-34 (CPYCQSEDTQVKDSRPAEDGAAIRRRRVCPDC) fold into a zinc finger. Positions 49–139 (LVVVKKSGRK…VYRNFREAKD (91 aa)) constitute an ATP-cone domain.

This sequence belongs to the NrdR family. Requires Zn(2+) as cofactor.

Its function is as follows. Negatively regulates transcription of bacterial ribonucleotide reductase nrd genes and operons by binding to NrdR-boxes. This chain is Transcriptional repressor NrdR, found in Mesorhizobium japonicum (strain LMG 29417 / CECT 9101 / MAFF 303099) (Mesorhizobium loti (strain MAFF 303099)).